Here is a 439-residue protein sequence, read N- to C-terminus: Probable threonine protease PRSS50 (439 aa).

2 disordered regions span residues 1-22 (MEPWCGAEVRGQGPQGPRVPGA) and 48-130 (ERIR…TMAP). The N-terminal stretch at 1–47 (MEPWCGAEVRGQGPQGPRVPGASRSRSRALLLLLLLLLLLLPRRPAG) is a signal peptide. Over residues 9–21 (VRGQGPQGPRVPG) the composition is skewed to low complexity. The Extracellular segment spans residues 48 to 415 (ERIRPRRPPR…WIWDRLSGEP (368 aa)). Over residues 51–61 (RPRRPPRHAHP) the composition is skewed to basic residues. Over residues 112 to 127 (QAQTNQTTTAPPNSQT) the composition is skewed to low complexity. N-linked (GlcNAc...) asparagine glycans are attached at residues N116 and N187. A Peptidase S1 domain is found at 157–412 (FCGSSHEPDP…YRPWIWDRLS (256 aa)). Cysteines 192 and 208 form a disulfide. The active-site Charge relay system is H207. N226 carries N-linked (GlcNAc...) asparagine glycosylation. D260 functions as the Charge relay system in the catalytic mechanism. 3 disulfide bridges follow: C294/C370, C327/C350, and C360/C388. T364 functions as the Charge relay system in the catalytic mechanism. The helical transmembrane segment at 416-436 (LALPAPSRTLLLAFLLLLILL) threads the bilayer. Residues 437–439 (GTL) lie on the Cytoplasmic side of the membrane.

This sequence belongs to the peptidase S1 family.

The protein localises to the membrane. Functionally, may be involved in proteolysis through its threonine endopeptidase activity. The chain is Probable threonine protease PRSS50 (Prss50) from Mus musculus (Mouse).